The sequence spans 324 residues: Annexin A10 (324 aa).

4 Annexin repeats span residues 17 to 88 (FNPI…GLMY), 89 to 160 (PPPL…NLVQ), 171 to 243 (AMAA…AIVL), and 247 to 318 (DKPA…AICA).

Belongs to the annexin family.

This Homo sapiens (Human) protein is Annexin A10 (ANXA10).